Here is a 342-residue protein sequence, read N- to C-terminus: Endoplasmic reticulum junction formation protein lunapark-1 (342 aa).

Residues 1-39 (MGNLFSRNKSPATELERVALSIDDLKKRLQTISSSNTNT) are Cytoplasmic-facing. Positions 13–34 (TELERVALSIDDLKKRLQTISS) form a coiled coil. A helical membrane pass occupies residues 40-60 (LYYYYMSIVVILSIAMAHTWL). Residues 61–68 (RFEDPQKT) are Lumenal-facing. Residues 69 to 89 (YVACALMLGAIGIVLAGRYVI) form a helical membrane-spanning segment. Residues 90–342 (NGFFSWRTNR…ESKTMETEFH (253 aa)) lie on the Cytoplasmic side of the membrane. The stretch at 102–136 (QKLENAISQKTTLLDLVKETLKFKEAKEILDRYEK) forms a coiled coil. Positions 161 to 191 (ADSSMFATPKQEQKRVETPTAQGPNSAMNSM) are disordered. The span at 179-191 (PTAQGPNSAMNSM) shows a compositional bias: polar residues. The segment at 236-261 (CSICHTHNGMSTPAEYPYISFRCFEC) adopts a C4-type; plays a role in ER morphology zinc-finger fold. A disordered region spans residues 278–342 (RPPMGPKGIQ…ESKTMETEFH (65 aa)). Residues 295-321 (SENTHNMMENQKPSTDLTPSASQNGSE) show a composition bias toward polar residues. The span at 322–342 (KGSDSENEKVPESKTMETEFH) shows a compositional bias: basic and acidic residues.

This sequence belongs to the lunapark family. In terms of tissue distribution, expressed in cell bodies along the ventral cord around the pharynx and the tail both in larvae and adults. Also expressed in muscles and hypodermal cells.

It localises to the endoplasmic reticulum membrane. In terms of biological role, plays a role in tubular endoplasmic reticulum network formation and maintenance. May be involved in central nervous system development. Has a presynaptic role in neurotransmission. Likely to operate in synaptogenesis by regulating vesicular transport or localization. Required for correct localization of rab-3 and snb-1. The chain is Endoplasmic reticulum junction formation protein lunapark-1 (lnp-1) from Caenorhabditis elegans.